A 507-amino-acid polypeptide reads, in one-letter code: ATP synthase subunit alpha, chloroplastic (507 aa).

An ATP-binding site is contributed by glycine 170 to threonine 177.

The protein belongs to the ATPase alpha/beta chains family. F-type ATPases have 2 components, CF(1) - the catalytic core - and CF(0) - the membrane proton channel. CF(1) has five subunits: alpha(3), beta(3), gamma(1), delta(1), epsilon(1). CF(0) has four main subunits: a, b, b' and c.

It localises to the plastid. Its subcellular location is the chloroplast thylakoid membrane. The catalysed reaction is ATP + H2O + 4 H(+)(in) = ADP + phosphate + 5 H(+)(out). Produces ATP from ADP in the presence of a proton gradient across the membrane. The alpha chain is a regulatory subunit. This Dioscorea elephantipes (Elephant's foot yam) protein is ATP synthase subunit alpha, chloroplastic.